Consider the following 432-residue polypeptide: Serine--tRNA ligase (432 aa).

239–241 (TSE) provides a ligand contact to L-serine. Residue 270–272 (RSE) coordinates ATP. An L-serine-binding site is contributed by glutamate 293. Residue 357-360 (EISS) participates in ATP binding. Serine 392 is an L-serine binding site.

The protein belongs to the class-II aminoacyl-tRNA synthetase family. Type-1 seryl-tRNA synthetase subfamily. In terms of assembly, homodimer. The tRNA molecule binds across the dimer.

It is found in the cytoplasm. The enzyme catalyses tRNA(Ser) + L-serine + ATP = L-seryl-tRNA(Ser) + AMP + diphosphate + H(+). It catalyses the reaction tRNA(Sec) + L-serine + ATP = L-seryl-tRNA(Sec) + AMP + diphosphate + H(+). It participates in aminoacyl-tRNA biosynthesis; selenocysteinyl-tRNA(Sec) biosynthesis; L-seryl-tRNA(Sec) from L-serine and tRNA(Sec): step 1/1. Catalyzes the attachment of serine to tRNA(Ser). Is also able to aminoacylate tRNA(Sec) with serine, to form the misacylated tRNA L-seryl-tRNA(Sec), which will be further converted into selenocysteinyl-tRNA(Sec). The sequence is that of Serine--tRNA ligase from Methylibium petroleiphilum (strain ATCC BAA-1232 / LMG 22953 / PM1).